We begin with the raw amino-acid sequence, 109 residues long: MRILLKLFVESQNLGKAINALSEGGISGFYLKEYQGMSPDDWKGFLLAEEPEMAIKIVNELSQDTVVINSIVNIECLGKIKELVRKKLENDRYTLVELPVLGMEVNSPE.

The protein to M.jannaschii MJ1244 and MJ1245 and M.thermoautotrophicum MTH1110.

This is an uncharacterized protein from Methanococcus maripaludis (Methanococcus deltae).